A 529-amino-acid polypeptide reads, in one-letter code: Cytokinin dehydrogenase 4 (529 aa).

Residues 1 to 27 form the signal peptide; the sequence is MRGAMKPSIVHCLKLLMLLALGGVTMH. An FAD-binding PCMH-type domain is found at 63–244; it reads CSLLPAAVLH…TRARIALEPA (182 aa). FAD contacts are provided by A99, G101, and G103. The residue at position 104 (H104) is a Pros-8alpha-FAD histidine. S105, Q109, D168, T173, S179, V183, and I234 together coordinate FAD. N285, N419, and N425 each carry an N-linked (GlcNAc...) asparagine glycan. Residues Y479 and Q517 each coordinate FAD.

This sequence belongs to the oxygen-dependent FAD-linked oxidoreductase family. In terms of assembly, monomer. FAD is required as a cofactor. As to expression, expressed in inflorescence meristems.

It is found in the secreted. It localises to the extracellular space. The enzyme catalyses N(6)-dimethylallyladenine + A + H2O = 3-methyl-2-butenal + adenine + AH2. Catalyzes the oxidation of cytokinins, a family of N(6)-substituted adenine derivatives that are plant hormones, where the substituent is an isopentenyl group. This chain is Cytokinin dehydrogenase 4 (CKX4), found in Oryza sativa subsp. japonica (Rice).